The chain runs to 255 residues: Hydroxyacylglutathione hydrolase (255 aa).

Residues histidine 59, histidine 61, aspartate 63, histidine 64, histidine 118, aspartate 144, and histidine 182 each contribute to the Zn(2+) site.

Belongs to the metallo-beta-lactamase superfamily. Glyoxalase II family. As to quaternary structure, monomer. Requires Zn(2+) as cofactor.

The catalysed reaction is an S-(2-hydroxyacyl)glutathione + H2O = a 2-hydroxy carboxylate + glutathione + H(+). Its pathway is secondary metabolite metabolism; methylglyoxal degradation; (R)-lactate from methylglyoxal: step 2/2. In terms of biological role, thiolesterase that catalyzes the hydrolysis of S-D-lactoyl-glutathione to form glutathione and D-lactic acid. This chain is Hydroxyacylglutathione hydrolase, found in Synechococcus sp. (strain WH7803).